The sequence spans 319 residues: Beta-ketoacyl-[acyl-carrier-protein] synthase III (319 aa).

Residues Cys-110 and His-246 contribute to the active site. The segment at 247-251 (QANYR) is ACP-binding. The active site involves Asn-276.

The protein belongs to the thiolase-like superfamily. FabH family. In terms of assembly, homodimer.

The protein resides in the cytoplasm. It carries out the reaction malonyl-[ACP] + acetyl-CoA + H(+) = 3-oxobutanoyl-[ACP] + CO2 + CoA. It functions in the pathway lipid metabolism; fatty acid biosynthesis. In terms of biological role, catalyzes the condensation reaction of fatty acid synthesis by the addition to an acyl acceptor of two carbons from malonyl-ACP. Catalyzes the first condensation reaction which initiates fatty acid synthesis and may therefore play a role in governing the total rate of fatty acid production. Possesses both acetoacetyl-ACP synthase and acetyl transacylase activities. Its substrate specificity determines the biosynthesis of branched-chain and/or straight-chain of fatty acids. The polypeptide is Beta-ketoacyl-[acyl-carrier-protein] synthase III (Lactobacillus delbrueckii subsp. bulgaricus (strain ATCC BAA-365 / Lb-18)).